A 513-amino-acid polypeptide reads, in one-letter code: ATP synthase subunit alpha (513 aa).

ATP is bound at residue 169 to 176 (GDRQTGKT).

It belongs to the ATPase alpha/beta chains family. F-type ATPases have 2 components, CF(1) - the catalytic core - and CF(0) - the membrane proton channel. CF(1) has five subunits: alpha(3), beta(3), gamma(1), delta(1), epsilon(1). CF(0) has three main subunits: a(1), b(2) and c(9-12). The alpha and beta chains form an alternating ring which encloses part of the gamma chain. CF(1) is attached to CF(0) by a central stalk formed by the gamma and epsilon chains, while a peripheral stalk is formed by the delta and b chains.

The protein localises to the cell inner membrane. The enzyme catalyses ATP + H2O + 4 H(+)(in) = ADP + phosphate + 5 H(+)(out). Its function is as follows. Produces ATP from ADP in the presence of a proton gradient across the membrane. The alpha chain is a regulatory subunit. This Vibrio vulnificus (strain CMCP6) protein is ATP synthase subunit alpha.